The sequence spans 86 residues: Large ribosomal subunit protein bL31B (86 aa).

It belongs to the bacterial ribosomal protein bL31 family. Type B subfamily. In terms of assembly, part of the 50S ribosomal subunit.

This chain is Large ribosomal subunit protein bL31B, found in Vibrio vulnificus (strain YJ016).